Reading from the N-terminus, the 20-residue chain is Unknown protein NF040 from 2D-PAGE (20 aa).

The region spanning 1–20 (MKVYTDIFTRDEFLSDSYPM) is the TCTP domain.

It belongs to the TCTP family.

The polypeptide is Unknown protein NF040 from 2D-PAGE (Naegleria fowleri (Brain eating amoeba)).